The primary structure comprises 452 residues: GTPase Der (452 aa).

EngA-type G domains are found at residues 4-169 and 177-352; these read PIVA…PAPQ and IKVA…QEHR. GTP is bound by residues 10 to 17, 57 to 61, 120 to 123, 183 to 190, 230 to 234, and 295 to 298; these read GRPNVGKS, DTGGL, NKCE, DTAGI, and NKWD. Residues 353 to 439 form the KH-like domain; it reads RRVTTAVINE…IRLFWRGKKV (87 aa).

This sequence belongs to the TRAFAC class TrmE-Era-EngA-EngB-Septin-like GTPase superfamily. EngA (Der) GTPase family. As to quaternary structure, associates with the 50S ribosomal subunit.

Functionally, GTPase that plays an essential role in the late steps of ribosome biogenesis. The polypeptide is GTPase Der (Synechocystis sp. (strain ATCC 27184 / PCC 6803 / Kazusa)).